Reading from the N-terminus, the 236-residue chain is Ribonuclease P protein component 3 (236 aa).

This sequence belongs to the eukaryotic/archaeal RNase P protein component 3 family. In terms of assembly, consists of a catalytic RNA component and at least 4-5 protein subunits.

It is found in the cytoplasm. The catalysed reaction is Endonucleolytic cleavage of RNA, removing 5'-extranucleotides from tRNA precursor.. Functionally, part of ribonuclease P, a protein complex that generates mature tRNA molecules by cleaving their 5'-ends. This chain is Ribonuclease P protein component 3, found in Natronomonas pharaonis (strain ATCC 35678 / DSM 2160 / CIP 103997 / JCM 8858 / NBRC 14720 / NCIMB 2260 / Gabara) (Halobacterium pharaonis).